The following is a 574-amino-acid chain: Glutamyl-tRNA(Gln) amidotransferase subunit B, mitochondrial (574 aa).

The transit peptide at 1-12 directs the protein to the mitochondrion; the sequence is MIRQFVSHRGIP. The tract at residues 34–62 is disordered; sequence PLGRKNWSTSDEAKSKRAAMRKGGAPPPE.

It belongs to the GatB/GatE family. GatB subfamily. Subunit of the heterotrimeric GatCAB amidotransferase (AdT) complex, composed of A, B and C subunits.

It localises to the mitochondrion. The enzyme catalyses L-glutamyl-tRNA(Gln) + L-glutamine + ATP + H2O = L-glutaminyl-tRNA(Gln) + L-glutamate + ADP + phosphate + H(+). In terms of biological role, allows the formation of correctly charged Gln-tRNA(Gln) through the transamidation of misacylated Glu-tRNA(Gln) in the mitochondria. The reaction takes place in the presence of glutamine and ATP through an activated gamma-phospho-Glu-tRNA(Gln). This is Glutamyl-tRNA(Gln) amidotransferase subunit B, mitochondrial from Ajellomyces capsulatus (strain H143) (Darling's disease fungus).